Consider the following 676-residue polypeptide: Forkhead box protein biniou (676 aa).

Disordered stretches follow at residues 22–50 (YHDP…GHPY), 131–160 (AHSA…SSST), 203–232 (QEQA…SRIS), 249–312 (NYSS…PEKP), and 583–651 (IQHA…AYLP). The segment covering 34-48 (PHAHSHPHQHTHTGH) has biased composition (basic residues). The span at 133 to 160 (SAGSASPQSNSKTPTDLPQDLQYASSST) shows a compositional bias: polar residues. Low complexity predominate over residues 203 to 220 (QEQAGQQQPQQLPAQQLQ). Polar residues predominate over residues 257–273 (PAKSLNGSESSPPSQNH). Residues 311–408 (KPALSYINMI…DEGSLRRRPR (98 aa)) constitute a DNA-binding region (fork-head). Positions 583–593 (IQHAQAQAQAQ) are enriched in low complexity. Over residues 594-611 (AHHHHHQHHASHPSHSHQ) the composition is skewed to basic residues. The segment covering 612–625 (GHGSMHQNHGTSST) has biased composition (low complexity). Residues 637 to 647 (GIDHSPIDRKP) are compositionally biased toward basic and acidic residues.

As to quaternary structure, binds to DNA. In terms of tissue distribution, in embryo, expressed in all types of visceral muscles and their progenitors (at protein level). In late stage 10 embryo, expressed in the caudal visceral mesoderm and trunk and hindgut visceral mesoderm progenitors.

The protein resides in the nucleus. Its function is as follows. Component of a regulatory network controlling visceral mesoderm development and midgut morphogenesis. Transcriptional regulator involved in the activation of a large number of genes in the visceral mesoderm including betaTub60D, dpp and Hand. Binds to and regulates a number of enhancers driving expression in the visceral mesoderm in a temporally and spatially restricted manner. Also to binds to enhancers cooperatively with activators, such as bap or HLH54F, to coregulate expression of shared target genes in the visceral mesoderm. Binds to the Ndg enhancer and drives expression of Ndg in the late visceral musculature. May be involved in the transcriptional regulation of wupA in the visceral mesoderm. Plays an indirect role in the later stages of salivary gland positioning. The protein is Forkhead box protein biniou (bin) of Drosophila melanogaster (Fruit fly).